We begin with the raw amino-acid sequence, 193 residues long: Peptidyl-tRNA hydrolase (193 aa).

TRNA is bound at residue Y15. The active-site Proton acceptor is H20. Positions 65, 67, and 113 each coordinate tRNA.

Belongs to the PTH family. Monomer.

Its subcellular location is the cytoplasm. The enzyme catalyses an N-acyl-L-alpha-aminoacyl-tRNA + H2O = an N-acyl-L-amino acid + a tRNA + H(+). Its function is as follows. Hydrolyzes ribosome-free peptidyl-tRNAs (with 1 or more amino acids incorporated), which drop off the ribosome during protein synthesis, or as a result of ribosome stalling. Functionally, catalyzes the release of premature peptidyl moieties from peptidyl-tRNA molecules trapped in stalled 50S ribosomal subunits, and thus maintains levels of free tRNAs and 50S ribosomes. The chain is Peptidyl-tRNA hydrolase from Ehrlichia canis (strain Jake).